Reading from the N-terminus, the 253-residue chain is NAC transcription factor 32 (253 aa).

In terms of domain architecture, NAC spans 10–160; it reads FPPGFRFHPT…DWVLCRIYNK (151 aa). The DNA-binding element occupies 106-166; it reads VGIKKALVFY…IYNKKGVIEK (61 aa).

Expressed in germinating seeds, roots, leaf veins, open flowers and silique stalks.

The protein localises to the nucleus. Its function is as follows. Transcriptional activator that positively regulates age-dependent senescence, dark-induced leaf senescence and stress-induced senescence. Regulates leaf senescence through the modulation of the expression of senescence-associated genes SGR1/NYE1, SAG113 and SAUR36/SAG201, which are involved in chlorophyll degradation, and abscisic acid (ABA) and auxin promotion of senescence, respectively. Promotes reactive oxygen species (ROS) production during age-dependent and stress-induced senescence. Positively regulates auxin-mediated responses in roots. Stress-responsive NAC transcription factor involved in ABA-inducible leaf senescence signaling. Required for normal seed development and morphology. The sequence is that of NAC transcription factor 32 from Arabidopsis thaliana (Mouse-ear cress).